Consider the following 99-residue polypeptide: NADH-ubiquinone oxidoreductase chain 4L (99 aa).

A run of 3 helical transmembrane segments spans residues 1-21 (MTIY…FFTQ), 25-45 (ILSL…SVAV), and 56-76 (VMIL…SLLV).

It belongs to the complex I subunit 4L family.

It localises to the mitochondrion membrane. The enzyme catalyses a ubiquinone + NADH + 5 H(+)(in) = a ubiquinol + NAD(+) + 4 H(+)(out). In terms of biological role, core subunit of the mitochondrial membrane respiratory chain NADH dehydrogenase (Complex I) that is believed to belong to the minimal assembly required for catalysis. Complex I functions in the transfer of electrons from NADH to the respiratory chain. The immediate electron acceptor for the enzyme is believed to be ubiquinone. This Albinaria caerulea (Land snail) protein is NADH-ubiquinone oxidoreductase chain 4L (ND4L).